The sequence spans 77 residues: Large ribosomal subunit protein bL28 (77 aa).

Positions Met1–Ala21 are disordered.

The protein belongs to the bacterial ribosomal protein bL28 family.

The chain is Large ribosomal subunit protein bL28 from Chromobacterium violaceum (strain ATCC 12472 / DSM 30191 / JCM 1249 / CCUG 213 / NBRC 12614 / NCIMB 9131 / NCTC 9757 / MK).